The following is a 642-amino-acid chain: MPIITLPDGSQRQFDNPVSVLEVAQSIGSGLAKATIAGRVNGERRDASDMISEDANLEIITAKDEDGLEIIRHSTAHLLGHAIKQLFPNVKMAIGPTIDNGFYYDIDLDRSLTQEDIDTLEKRMLELAKTNYDVIKKRVSWQEARDTFESRAEPYKIAILDENIAKDDQPALYHHEEYIDMCRGPHVPNMRFCHHFKLMKVAGAYWRGNSDNKMLQRIYGTAWADKKQLADYLHRLEEAAKRDHRKIGKALNLYHMQEEAPGMVFWHNDGWTIFRELETFVRTKLKEYDYQEVKGPFMMDRVLWERTGHWQNYADLMFTTQSENREYAIKPMNCPGHVQIFNQGLKSYRDLPIRMAEFGSCHRNEPSGSLHGLMRVRGFTQDDAHIFCTEDQIESEVTSCIKMVYDIYSTFGFTDIFVKLSTRPEKRIGEDVMWDRAEQGLANALKHNGLEYEIQEGEGAFYGPKIEFALRDCLDREWQCGTIQLDFALPGRLDATYVAEDNARRTPVMIHRAILGSIERFIGIITEEYAGFFPAWLAPIQAVVMNITDSQADYVQKVVKQFSEAGLRVKADIRNEKVGFKIREHTLRRVPYMLVCGDKEIVENKIAVRTRKGTDLGTFSVEEFVEILKQQVRKRELTLLGE.

Positions 1–61 (MPIITLPDGS…SEDANLEIIT (61 aa)) constitute a TGS domain. Residues 243–534 (DHRKIGKALN…ITEEYAGFFP (292 aa)) are catalytic. Zn(2+)-binding residues include cysteine 334, histidine 385, and histidine 511.

The protein belongs to the class-II aminoacyl-tRNA synthetase family. As to quaternary structure, homodimer. Requires Zn(2+) as cofactor.

It localises to the cytoplasm. The enzyme catalyses tRNA(Thr) + L-threonine + ATP = L-threonyl-tRNA(Thr) + AMP + diphosphate + H(+). In terms of biological role, catalyzes the attachment of threonine to tRNA(Thr) in a two-step reaction: L-threonine is first activated by ATP to form Thr-AMP and then transferred to the acceptor end of tRNA(Thr). Also edits incorrectly charged L-seryl-tRNA(Thr). This chain is Threonine--tRNA ligase, found in Histophilus somni (strain 2336) (Haemophilus somnus).